A 199-amino-acid chain; its full sequence is Hematopoietic prostaglandin D synthase (199 aa).

The GST N-terminal domain occupies 2 to 79; that stretch reads PNYKLTYFNM…YLTKNTDLAG (78 aa). Glutathione contacts are provided by residues tyrosine 8, arginine 14, tryptophan 39, 49–51, and 63–64; these read GKI and QS. Residues 81-199 form the GST C-terminal domain; the sequence is TEMEQCHVDA…WIKRRPQTKL (119 aa).

This sequence belongs to the GST superfamily. Sigma family. Homodimer. The cofactor is glutathione. In terms of tissue distribution, expressed in a number of megakaryocytic cell lines but not in platelets. Highly expressed in adipose tissue, macrophages and placenta. Also expressed at lower levels in lung, heart, lymph nodes, appendix, bone marrow and fetal liver.

Its subcellular location is the cytoplasm. It carries out the reaction prostaglandin H2 = prostaglandin D2. The catalysed reaction is RX + glutathione = an S-substituted glutathione + a halide anion + H(+). The enzyme catalyses 2-glyceryl-prostaglandin H2 = 2-glyceryl-prostaglandin D2. Prostaglandin PGD2 synthesis is stimulated by calcium and magnesium ions. One calcium or magnesium ion is bound between the subunits of the homodimer. The interactions with the protein are for the most part mediated via water molecules. Magnesium increases the affinity for glutathione, while calcium has no effect on the affinity for glutathione. Its function is as follows. Bifunctional enzyme which catalyzes both the conversion of PGH2 to PGD2, a prostaglandin involved in smooth muscle contraction/relaxation and a potent inhibitor of platelet aggregation, and the conjugation of glutathione with a wide range of aryl halides and organic isothiocyanates. Also exhibits low glutathione-peroxidase activity towards cumene hydroperoxide. The sequence is that of Hematopoietic prostaglandin D synthase from Homo sapiens (Human).